Here is a 155-residue protein sequence, read N- to C-terminus: Fibroblast growth factor 1 (155 aa).

Positions 1–15 (MAEGEITTFTALTER) are excised as a propeptide. A heparin-binding site is contributed by asparagine 33. Residues 127–143 (KKNGNSKLGPRTHYGQK) are heparin-binding.

This sequence belongs to the heparin-binding growth factors family.

The protein localises to the secreted. Its subcellular location is the cytoplasm. The protein resides in the cell cortex. It localises to the cytosol. It is found in the nucleus. Functionally, plays an important role in the regulation of cell survival, cell division, angiogenesis, cell differentiation and cell migration. Functions as a potent mitogen in vitro. Acts as a ligand for FGFR1 and integrins. Binds to FGFR1 in the presence of heparin leading to FGFR1 dimerization and activation via sequential autophosphorylation on tyrosine residues which act as docking sites for interacting proteins, leading to the activation of several signaling cascades. Binds to integrins. Its binding to integrins and subsequent ternary complex formation with integrins and FGFR1 are essential for FGF1 signaling. This Gallus gallus (Chicken) protein is Fibroblast growth factor 1 (FGF1).